Here is a 591-residue protein sequence, read N- to C-terminus: MKKISLPKIGIRPVIDGRRMGVRESLEEQTMNMAKATAALLTEKLRHACGATVECVISDTCIAGMAEAAACEEKFSSQNVGLTITVTPCWCYGSETIDMDPTRPKAIWGFNGTERPGAVYLAAALAAHSQKGIPAFSIYGHDVQDADDTSIPADVEEKLLRFARAGLAVASMKGKSYLSLGGVSMGIAGSIVDHNFFESWLGMKVQAVDMTELRRRIDQKIYDEAELEMALAWADKNFRYGEDENNKQYQRNAEQSRAVLRESLLMAMCIRDMMQGNSKLADIGRVEESLGYNAIAAGFQGQRHWTDQYPNGDTAEAILNSSFDWNGVRKPFVVATENDSLNGVAMLMGHQLTGTAQVFADVRTYWSPEAIERVTGHKLDGLAEHGIIHLINSGSAALDGSCKQRDSEGNPTMKPHWEISQQEADACLAATEWCPAIHEYFRGGGYSSRFLTEGGVPFTMTRVNIIKGLGPVLQIAEGWSVELPKDVHDILNKRTNSTWPTTWFAPRLTGKGPFTDVYSVMANWGANHGVLTIGHVGADFITLASMLRIPVCMHNVEETKVYRPSAWAAHGMDIEGQDYRACQNYGPLYKR.

Catalysis depends on proton acceptor residues glutamate 337 and aspartate 361. Glutamate 337, aspartate 361, and histidine 528 together coordinate Mn(2+).

Belongs to the L-fucose isomerase family. In terms of assembly, homohexamer. It depends on Mn(2+) as a cofactor.

The protein localises to the cytoplasm. It catalyses the reaction L-fucose = L-fuculose. The protein operates within carbohydrate degradation; L-fucose degradation; L-lactaldehyde and glycerone phosphate from L-fucose: step 1/3. In terms of biological role, converts the aldose L-fucose into the corresponding ketose L-fuculose. The chain is L-fucose isomerase from Escherichia coli O6:H1 (strain CFT073 / ATCC 700928 / UPEC).